Reading from the N-terminus, the 603-residue chain is Beta-hexosaminidase (603 aa).

The first 19 residues, 1 to 19 (MAYFRLYAVLLAVASSVAA), serve as a signal peptide directing secretion. Catalysis depends on charge relay system residues aspartate 225, histidine 278, and glutamate 349. A disulfide bridge connects residues cysteine 293 and cysteine 354. Asparagine 356 carries an N-linked (GlcNAc...) asparagine glycan. Residues cysteine 451 and cysteine 486 are joined by a disulfide bond. N-linked (GlcNAc...) asparagine glycans are attached at residues asparagine 503 and asparagine 528. Cysteine 586 and cysteine 593 are joined by a disulfide.

The protein belongs to the glycosyl hydrolase 20 family. As to quaternary structure, homodimer.

It localises to the secreted. It carries out the reaction Hydrolysis of terminal non-reducing N-acetyl-D-hexosamine residues in N-acetyl-beta-D-hexosaminides.. Part of the binary chitinolytic system. Involved in hydrolysis of chitobiose and higher chito-oligomers (produced from cell wall chitin by endochitinases), thus contributing to the formation of germ tubes, fruit-bodies and septa during hyphenation. Hydrolyzes synthetic substrates p-nitrophenyl-beta-N-acetyl-glucosamine (pNP-beta-GlcNAc), p-nitrophenyl-beta-N-acetyl-galactosamine (pNP-beta-GalNAc) and 5-bromo-4-chloro-3-indoyl-beta-D-N-glucosaminide (X-GlcNAc). The chain is Beta-hexosaminidase from Emericella nidulans (Aspergillus nidulans).